The sequence spans 365 residues: Peptide chain release factor 2 (365 aa).

Gln-249 is modified (N5-methylglutamine).

Belongs to the prokaryotic/mitochondrial release factor family. Post-translationally, methylated by PrmC. Methylation increases the termination efficiency of RF2.

Its subcellular location is the cytoplasm. In terms of biological role, peptide chain release factor 2 directs the termination of translation in response to the peptide chain termination codons UGA and UAA. The sequence is that of Peptide chain release factor 2 from Acholeplasma laidlawii (strain PG-8A).